The following is a 138-amino-acid chain: MVDYFDYSSLLTRAREQLPEEVFKDVRFEIPSADSFVEGNRTIIKNFKDIAKFMERDPQEFAKYVMKELGTAGDMEGVRLILQGKFGWRMVNEKIQNYVNEYVLCPECGKPDTKIVKEGRIHFLKCTACGAMKPVKTL.

The protein belongs to the eIF-2-beta/eIF-5 family. As to quaternary structure, heterotrimer composed of an alpha, a beta and a gamma chain.

In terms of biological role, eIF-2 functions in the early steps of protein synthesis by forming a ternary complex with GTP and initiator tRNA. This Methanococcus maripaludis (strain DSM 14266 / JCM 13030 / NBRC 101832 / S2 / LL) protein is Translation initiation factor 2 subunit beta.